Reading from the N-terminus, the 146-residue chain is Protein disulfide-isomerase 5-1 (146 aa).

Residues 1–25 form the signal peptide; sequence MTLGARLVAPMIILLLFIPIELVKA. The region spanning 26 to 133 is the Thioredoxin domain; the sequence is EVITLTPETF…LKAFVVEETE (108 aa). Active-site nucleophile residues include Cys-55 and Cys-58. A disulfide bridge links Cys-55 with Cys-58.

Belongs to the protein disulfide isomerase family.

Functionally, acts as a protein-folding catalyst that interacts with nascent polypeptides to catalyze the formation, isomerization, and reduction or oxidation of disulfide bonds. The polypeptide is Protein disulfide-isomerase 5-1 (PDIL5-1) (Arabidopsis thaliana (Mouse-ear cress)).